Reading from the N-terminus, the 302-residue chain is Urease accessory protein UreD 2 (302 aa).

The protein belongs to the UreD family. As to quaternary structure, ureD, UreF and UreG form a complex that acts as a GTP-hydrolysis-dependent molecular chaperone, activating the urease apoprotein by helping to assemble the nickel containing metallocenter of UreC. The UreE protein probably delivers the nickel.

The protein resides in the cytoplasm. In terms of biological role, required for maturation of urease via the functional incorporation of the urease nickel metallocenter. This is Urease accessory protein UreD 2 from Brucella melitensis biotype 1 (strain ATCC 23456 / CCUG 17765 / NCTC 10094 / 16M).